A 678-amino-acid chain; its full sequence is Beta-catenin-like protein hmp-2 (678 aa).

ARM repeat units lie at residues Arg153–Met192, Pro280–Ser319, Asp320–Cys359, Thr362–Ala403, and Glu409–Leu448.

It belongs to the beta-catenin family. In terms of assembly, component of a core catenin-cadherin complex consisting of hmr-1, hmp-1 and hmp-2; the complex localizes to adherens junctions. Interacts with hmr-1; the interaction is direct. May interact with hmp-1. Interacts with frk-1. As to expression, epidermal cells.

It localises to the cell junction. Its subcellular location is the adherens junction. Required for cell migration during body enclosure and cell shape changes during body elongation. Plays a role in recruitment of the cadherin protein hmr-1 to adherens junctions. The sequence is that of Beta-catenin-like protein hmp-2 (hmp-2) from Caenorhabditis elegans.